The primary structure comprises 423 residues: Serine--tRNA ligase (423 aa).

Thr-228–Glu-230 provides a ligand contact to L-serine. Arg-259–Glu-261 contributes to the ATP binding site. Residue Glu-282 coordinates L-serine. Glu-346 to Ser-349 contacts ATP. L-serine is bound at residue Ser-384.

The protein belongs to the class-II aminoacyl-tRNA synthetase family. Type-1 seryl-tRNA synthetase subfamily. Homodimer. The tRNA molecule binds across the dimer.

The protein resides in the cytoplasm. It catalyses the reaction tRNA(Ser) + L-serine + ATP = L-seryl-tRNA(Ser) + AMP + diphosphate + H(+). It carries out the reaction tRNA(Sec) + L-serine + ATP = L-seryl-tRNA(Sec) + AMP + diphosphate + H(+). Its pathway is aminoacyl-tRNA biosynthesis; selenocysteinyl-tRNA(Sec) biosynthesis; L-seryl-tRNA(Sec) from L-serine and tRNA(Sec): step 1/1. In terms of biological role, catalyzes the attachment of serine to tRNA(Ser). Is also able to aminoacylate tRNA(Sec) with serine, to form the misacylated tRNA L-seryl-tRNA(Sec), which will be further converted into selenocysteinyl-tRNA(Sec). The chain is Serine--tRNA ligase from Ehrlichia canis (strain Jake).